We begin with the raw amino-acid sequence, 366 residues long: Chorismate synthase (366 aa).

Residues arginine 48 and arginine 54 each contribute to the NADP(+) site. Residues arginine 125–serine 127, asparagine 241–alanine 242, glycine 285, lysine 300–serine 304, and arginine 326 contribute to the FMN site.

Belongs to the chorismate synthase family. In terms of assembly, homotetramer. FMNH2 is required as a cofactor.

The catalysed reaction is 5-O-(1-carboxyvinyl)-3-phosphoshikimate = chorismate + phosphate. It participates in metabolic intermediate biosynthesis; chorismate biosynthesis; chorismate from D-erythrose 4-phosphate and phosphoenolpyruvate: step 7/7. Functionally, catalyzes the anti-1,4-elimination of the C-3 phosphate and the C-6 proR hydrogen from 5-enolpyruvylshikimate-3-phosphate (EPSP) to yield chorismate, which is the branch point compound that serves as the starting substrate for the three terminal pathways of aromatic amino acid biosynthesis. This reaction introduces a second double bond into the aromatic ring system. This is Chorismate synthase from Cereibacter sphaeroides (strain ATCC 17029 / ATH 2.4.9) (Rhodobacter sphaeroides).